The chain runs to 332 residues: Anthranilate phosphoribosyltransferase (332 aa).

5-phospho-alpha-D-ribose 1-diphosphate is bound by residues Gly-79, 82 to 83, Thr-87, 89 to 92, 107 to 115, and Ser-119; these read GD, NIST, and KHGNRSVSS. Gly-79 contributes to the anthranilate binding site. Residue Ser-91 participates in Mg(2+) binding. Residue Asn-110 coordinates anthranilate. Arg-165 is a binding site for anthranilate. Residues Asp-223 and Glu-224 each contribute to the Mg(2+) site.

This sequence belongs to the anthranilate phosphoribosyltransferase family. In terms of assembly, homodimer. Mg(2+) serves as cofactor.

The enzyme catalyses N-(5-phospho-beta-D-ribosyl)anthranilate + diphosphate = 5-phospho-alpha-D-ribose 1-diphosphate + anthranilate. Its pathway is amino-acid biosynthesis; L-tryptophan biosynthesis; L-tryptophan from chorismate: step 2/5. Catalyzes the transfer of the phosphoribosyl group of 5-phosphorylribose-1-pyrophosphate (PRPP) to anthranilate to yield N-(5'-phosphoribosyl)-anthranilate (PRA). This is Anthranilate phosphoribosyltransferase from Vibrio parahaemolyticus serotype O3:K6 (strain RIMD 2210633).